The following is a 191-amino-acid chain: Small ribosomal subunit protein uS7 (191 aa).

The interval 56-80 (NKSGEQGDGDGESGGKAGGIKKRSL) is disordered.

This sequence belongs to the universal ribosomal protein uS7 family. In terms of assembly, part of the 30S ribosomal subunit. Contacts proteins S9 and S11.

One of the primary rRNA binding proteins, it binds directly to 16S rRNA where it nucleates assembly of the head domain of the 30S subunit. Is located at the subunit interface close to the decoding center, probably blocks exit of the E-site tRNA. This is Small ribosomal subunit protein uS7 from Coxiella burnetii (strain RSA 493 / Nine Mile phase I).